The following is a 101-amino-acid chain: Large ribosomal subunit protein bL27 (101 aa).

A disordered region spans residues 1–21; it reads MAHKKAGGSSRNGRDSRSKRL.

The protein belongs to the bacterial ribosomal protein bL27 family.

The protein is Large ribosomal subunit protein bL27 of Buchnera aphidicola subsp. Cinara cedri (strain Cc).